Reading from the N-terminus, the 363-residue chain is 3-isopropylmalate dehydrogenase (363 aa).

Residue 78–91 (XXXXXXXXXXXXXX) coordinates NAD(+). Substrate contacts are provided by Arg99, Arg109, Arg138, and Asp227. Positions 227, 251, and 255 each coordinate Mg(2+). An NAD(+)-binding site is contributed by 285 to 297 (GSAPDIEGKNIAN).

It belongs to the isocitrate and isopropylmalate dehydrogenases family. LeuB type 1 subfamily. Homodimer. Mg(2+) is required as a cofactor. Mn(2+) serves as cofactor.

Its subcellular location is the cytoplasm. It catalyses the reaction (2R,3S)-3-isopropylmalate + NAD(+) = 4-methyl-2-oxopentanoate + CO2 + NADH. It functions in the pathway amino-acid biosynthesis; L-leucine biosynthesis; L-leucine from 3-methyl-2-oxobutanoate: step 3/4. Functionally, catalyzes the oxidation of 3-carboxy-2-hydroxy-4-methylpentanoate (3-isopropylmalate) to 3-carboxy-4-methyl-2-oxopentanoate. The product decarboxylates to 4-methyl-2 oxopentanoate. The protein is 3-isopropylmalate dehydrogenase of Buchnera aphidicola subsp. Uroleucon solidaginis.